The following is a 475-amino-acid chain: Sulfate adenylyltransferase subunit 1 (475 aa).

The region spanning 25 to 239 (KSLLRFLTCG…EVLETVEIQR (215 aa)) is the tr-type G domain. The segment at 34–41 (GSVDDGKS) is G1. 34-41 (GSVDDGKS) serves as a coordination point for GTP. The segment at 92–96 (GITID) is G2. Residues 113–116 (DTPG) are G3. GTP contacts are provided by residues 113–117 (DTPGH) and 168–171 (NKMD). The tract at residues 168–171 (NKMD) is G4. Residues 206–208 (SAL) are G5.

This sequence belongs to the TRAFAC class translation factor GTPase superfamily. Classic translation factor GTPase family. CysN/NodQ subfamily. In terms of assembly, heterodimer composed of CysD, the smaller subunit, and CysN.

It catalyses the reaction sulfate + ATP + H(+) = adenosine 5'-phosphosulfate + diphosphate. The protein operates within sulfur metabolism; hydrogen sulfide biosynthesis; sulfite from sulfate: step 1/3. Its function is as follows. With CysD forms the ATP sulfurylase (ATPS) that catalyzes the adenylation of sulfate producing adenosine 5'-phosphosulfate (APS) and diphosphate, the first enzymatic step in sulfur assimilation pathway. APS synthesis involves the formation of a high-energy phosphoric-sulfuric acid anhydride bond driven by GTP hydrolysis by CysN coupled to ATP hydrolysis by CysD. The protein is Sulfate adenylyltransferase subunit 1 of Escherichia coli (strain ATCC 8739 / DSM 1576 / NBRC 3972 / NCIMB 8545 / WDCM 00012 / Crooks).